Consider the following 64-residue polypeptide: p7b (64 aa).

The Cytoplasmic portion of the chain corresponds to Met1–Gln12. Residues Trp13–Leu30 traverse the membrane as a helical; Signal-anchor for type II membrane protein segment. Over Thr31–Lys64 the chain is Lumenal.

It belongs to the gammacarmovirus double gene block protein 2 family.

The protein localises to the host endoplasmic reticulum membrane. Required for cell-to-cell movement of virions in the host plant together with p7a. The polypeptide is p7b (Maize chlorotic mottle virus (isolate United States/Kansas/1987) (MCMV)).